The sequence spans 124 residues: Large ribosomal subunit protein mL52 (124 aa).

A mitochondrion-targeting transit peptide spans 1–23 (MAALGMLLSTGVRRLHCGSAARA). The disordered stretch occupies residues 99 to 124 (LQEEKRKQQNALKPKGVLLQNPGPSQ).

Belongs to the mitochondrion-specific ribosomal protein mL52 family. As to quaternary structure, component of the mitochondrial ribosome large subunit (39S) which comprises a 16S rRNA and about 50 distinct proteins.

It localises to the mitochondrion. The sequence is that of Large ribosomal subunit protein mL52 (MRPL52) from Bos taurus (Bovine).